A 3004-amino-acid chain; its full sequence is Guanylate cyclase beta (3004 aa).

Residues 1-66 (MKETDKIKSE…FSLYNFIRRL (66 aa)) lie on the Cytoplasmic side of the membrane. Residues 67-87 (ISLDAVIVYTLFMTVYIFSEI) traverse the membrane as a helical segment. The Extracellular portion of the chain corresponds to 88–94 (SQGITKK). Residues 95-115 (YLFVDTAISLFLNIGILVVIE) form a helical membrane-spanning segment. At 116 to 300 (SLFELKLLKD…TFCIKMNNVV (185 aa)) the chain is on the cytoplasmic side. The chain crosses the membrane as a helical span at residues 301-321 (YYLIFMYILFVLLSIIIKAIF). Residues 322 to 334 (YRKGKLLENSNDT) lie on the Extracellular side of the membrane. Asn332 is a glycosylation site (N-linked (GlcNAc...) asparagine). The helical transmembrane segment at 335-355 (FFTVLEDFIGLYILVLPVMLY) threads the bilayer. The Cytoplasmic portion of the chain corresponds to 356–991 (SEKSLIYIIQ…GRLNRFSLCR (636 aa)). Residues 992–1012 (AFLWIIYLKVMIGSFYFFHNF) traverse the membrane as a helical segment. Over 1013 to 1022 (DNFFSGSSIS) the chain is Extracellular. A helical membrane pass occupies residues 1023 to 1043 (SILYSQTAFAIFHYSLIVAFA). The Cytoplasmic portion of the chain corresponds to 1044–1072 (SYEIDIPYKFIRNFPYIYQLARRKYFLNN). The helical transmembrane segment at 1073–1093 (TIIFLNIVESIFSSFISYYIL) threads the bilayer. Residues 1094 to 1105 (RGNLFNLITHRK) are Extracellular-facing. The chain crosses the membrane as a helical span at residues 1106–1126 (FTFHIFVLNFFLISEKILLFS). The Cytoplasmic segment spans residues 1127–1130 (KTWH). Residues 1131–1151 (IFFFIMTIIIVSILFIYINIY) form a helical membrane-spanning segment. At 1152-1171 (TLVDCLITGKCEFSLFDPED) the chain is on the extracellular side. The chain crosses the membrane as a helical span at residues 1172–1192 (SYFWISLLPILYINFIIDKFM). Over 1193-1297 (KFVKNKIYPD…YEKRNKLKLR (105 aa)) the chain is Cytoplasmic. The chain crosses the membrane as a helical span at residues 1298-1318 (IIILLLFIIFLITFTIQIIIS). At 1319-1327 (KFIEKKLHS) the chain is on the extracellular side. A helical transmembrane segment spans residues 1328 to 1348 (LSYLTVIYYIVAVLYLIKILI). Over 1349–1353 (RNKTN) the chain is Cytoplasmic. Residues 1354 to 1374 (YTYFYIIGKLLLVIGYLLEIS) form a helical membrane-spanning segment. Residues 1375 to 1394 (ENSVNNIINMLVTYSFTVCY) lie on the Extracellular side of the membrane. The chain crosses the membrane as a helical span at residues 1395 to 1415 (IFFISFKILEGLVMCIIILSI). At 1416 to 1457 (AIWVYYHKNNNLNAMCTDFCDNPYTSLDNLEYINISCICKQQ) the chain is on the cytoplasmic side. The chain crosses the membrane as a helical span at residues 1458-1478 (IFTFLICTLSFTLICLFMKYY). Residues 1479 to 1500 (EIYYLKKKFLTRYKQKVNLGKQ) lie on the Extracellular side of the membrane. Residues 1501-1521 (IEILHTMLPSFLVEYLLVSDP) form a helical membrane-spanning segment. Residues 1522–2563 (KADGIMVGKN…EIINIDLTKK (1042 aa)) lie on the Cytoplasmic side of the membrane. The region spanning 1541-1696 (SVIFCDIDDF…DTVNTASRMK (156 aa)) is the Guanylate cyclase 1 domain. The segment covering 2463-2476 (TMSNSKSGQTNITT) has biased composition (polar residues). The segment at 2463-2491 (TMSNSKSGQTNITTDNKKSQIKKNGDVNK) is disordered. The segment covering 2477 to 2488 (DNKKSQIKKNGD) has biased composition (basic and acidic residues). The helical transmembrane segment at 2564 to 2584 (LIIIFVISELILSLCNVIELS) threads the bilayer. The Extracellular portion of the chain corresponds to 2585–2594 (YYENKETPND). The helical transmembrane segment at 2595-2615 (FIVIIWLIRSIYLFTITFIWL) threads the bilayer. At 2616-2634 (LLKTKLKEYKDNSSKMMWT) the chain is on the cytoplasmic side. Residues 2635–2655 (TFILNIFLSSWGIIMIDLACI) traverse the membrane as a helical segment. Residues 2656 to 2667 (HYSNLVGNSRER) lie on the Extracellular side of the membrane. A helical transmembrane segment spans residues 2668 to 2688 (SIFFMKDATELIISMQLIFVK). Residues 2689 to 2695 (NMLFKHK) lie on the Cytoplasmic side of the membrane. Residues 2696-2716 (FFFFVFFFVFLMYSFFKLFVI) traverse the membrane as a helical segment. The Extracellular segment spans residues 2717-2722 (HVCELR). Residues 2723–2743 (ICCSILLILSINILYFWYSEY) form a helical membrane-spanning segment. Residues 2744 to 3004 (LDRTQYIIKR…KLREQNKVKG (261 aa)) are Cytoplasmic-facing. Residues 2793 to 2927 (AFLFADIVGF…LDVLIANHIE (135 aa)) enclose the Guanylate cyclase 2 domain. Positions 2798, 2799, and 2842 each coordinate Mg(2+).

In the N-terminal section; belongs to the cation transport ATPase (P-type) (TC 3.A.3) family. Type IV subfamily. It in the C-terminal section; belongs to the adenylyl cyclase class-4/guanylyl cyclase family. It depends on Mg(2+) as a cofactor. Mn(2+) serves as cofactor.

Its subcellular location is the membrane. The enzyme catalyses GTP = 3',5'-cyclic GMP + diphosphate. Functionally, catalyzes the synthesis of the second messenger cGMP from GTP. Probably by regulating cGMP production, required for ookinete gliding motility, which is necessary for the ookinete to traverse the midgut epithelium of the mosquito. In Plasmodium berghei (strain Anka), this protein is Guanylate cyclase beta.